We begin with the raw amino-acid sequence, 52 residues long: Conotoxin reg3h (52 aa).

A1 is a signal peptide. Residues 2 to 33 constitute a propeptide that is removed on maturation; the sequence is LPLDGDQPADQPAERMQDISPELNPLFHPVKR. Disulfide bonds link C35/C49, C36/C47, and C41/C50. 4-hydroxyproline occurs at positions 38, 48, and 51. At N52 the chain carries Asparagine amide.

As to expression, expressed by the venom duct.

It localises to the secreted. This chain is Conotoxin reg3h, found in Conus regius (Crown cone).